The chain runs to 125 residues: Small ribosomal subunit protein uS13 (125 aa).

The interval 94 to 125 (SLPVRGQRTQTNARTRKGKRKTVAGKKKAVKK) is disordered. Basic residues predominate over residues 107–125 (RTRKGKRKTVAGKKKAVKK).

It belongs to the universal ribosomal protein uS13 family. Part of the 30S ribosomal subunit. Forms a loose heterodimer with protein S19. Forms two bridges to the 50S subunit in the 70S ribosome.

In terms of biological role, located at the top of the head of the 30S subunit, it contacts several helices of the 16S rRNA. In the 70S ribosome it contacts the 23S rRNA (bridge B1a) and protein L5 of the 50S subunit (bridge B1b), connecting the 2 subunits; these bridges are implicated in subunit movement. Contacts the tRNAs in the A and P-sites. In Prosthecochloris aestuarii (strain DSM 271 / SK 413), this protein is Small ribosomal subunit protein uS13.